The chain runs to 344 residues: UDP-N-acetylglucosamine--N-acetylmuramyl-(pentapeptide) pyrophosphoryl-undecaprenol N-acetylglucosamine transferase (344 aa).

Residues Thr9–Gly11, Asn118, Arg157, Ser188, and Gln282 contribute to the UDP-N-acetyl-alpha-D-glucosamine site.

Belongs to the glycosyltransferase 28 family. MurG subfamily.

It localises to the cell inner membrane. The enzyme catalyses di-trans,octa-cis-undecaprenyl diphospho-N-acetyl-alpha-D-muramoyl-L-alanyl-D-glutamyl-meso-2,6-diaminopimeloyl-D-alanyl-D-alanine + UDP-N-acetyl-alpha-D-glucosamine = di-trans,octa-cis-undecaprenyl diphospho-[N-acetyl-alpha-D-glucosaminyl-(1-&gt;4)]-N-acetyl-alpha-D-muramoyl-L-alanyl-D-glutamyl-meso-2,6-diaminopimeloyl-D-alanyl-D-alanine + UDP + H(+). The protein operates within cell wall biogenesis; peptidoglycan biosynthesis. Cell wall formation. Catalyzes the transfer of a GlcNAc subunit on undecaprenyl-pyrophosphoryl-MurNAc-pentapeptide (lipid intermediate I) to form undecaprenyl-pyrophosphoryl-MurNAc-(pentapeptide)GlcNAc (lipid intermediate II). This Aquifex aeolicus (strain VF5) protein is UDP-N-acetylglucosamine--N-acetylmuramyl-(pentapeptide) pyrophosphoryl-undecaprenol N-acetylglucosamine transferase.